The following is a 582-amino-acid chain: MLSDIDICRSTPLKNISEVAKQAGLHHNEHQPLGQYKSKVSLTSLERLASQQDGKLVVVTAITPTPLGEGKTVTTIGLAQGLAKINQSAMACIRQPSMGPVFGVKGGAAGGGYSQVAPMEQLNLHLTGDIHAVTVAHNLASAAIDARLYHEQREGLEAFEARSGLKALDIDPRRIVWRRVLDHNDRALRMITVGKNEADKTINGFEREDGFDISAASELMAILALTDDLQDLRKRIGRVVLAYNNQGLPLTADDFNVAGAMTVTMKDSIEPTLMQTLEGVPTLIHAGPFANIAHGNSSIIADKIALKLSDFVVTEGGFGSDMGFEKACNIKVKASNKKPDCAVIVATLRGLKANSGLYDLRPGTPLPDSIFNDDQDALIAGFENLKWHINNVKQYQVPTVVAINRFPQDSAQELNALKQMITDFDPSVSVEVSEAFGQGGEGATQLAHAVVKACQKQSEFKPLYHSEQSLEEKLMAVAEVGYGAASISLSPLAKKQLAEFKLHGYSDLSVCLAKTPLSISTEAHIKGAPSQFDVPVRELKLCAGAGFIYALCGNVMTMPGLPDKPAFMSLDIDSKGNIVGLS.

65–72 (TPLGEGKT) lines the ATP pocket.

It belongs to the formate--tetrahydrofolate ligase family.

The enzyme catalyses (6S)-5,6,7,8-tetrahydrofolate + formate + ATP = (6R)-10-formyltetrahydrofolate + ADP + phosphate. It functions in the pathway one-carbon metabolism; tetrahydrofolate interconversion. This chain is Formate--tetrahydrofolate ligase, found in Vibrio atlanticus (strain LGP32) (Vibrio splendidus (strain Mel32)).